Consider the following 180-residue polypeptide: Alkyl hydroperoxide reductase AhpD (180 aa).

Cysteine 131 acts as the Proton donor in catalysis. A disulfide bond links cysteine 131 and cysteine 134. The active-site Cysteine sulfenic acid (-SOH) intermediate is the cysteine 134.

The protein belongs to the AhpD family.

It catalyses the reaction N(6)-[(R)-dihydrolipoyl]-L-lysyl-[lipoyl-carrier protein] + a hydroperoxide = N(6)-[(R)-lipoyl]-L-lysyl-[lipoyl-carrier protein] + an alcohol + H2O. Functionally, antioxidant protein with alkyl hydroperoxidase activity. Required for the reduction of the AhpC active site cysteine residues and for the regeneration of the AhpC enzyme activity. The polypeptide is Alkyl hydroperoxide reductase AhpD (Hyphomonas neptunium (strain ATCC 15444)).